A 300-amino-acid polypeptide reads, in one-letter code: Protoheme IX farnesyltransferase 1 (300 aa).

9 helical membrane-spanning segments follow: residues 28–48, 54–74, 100–120, 122–142, 149–169, 176–196, 222–242, 243–263, and 280–300; these read VVAL…PTIL, VAGL…NHLI, ALLF…VFTN, LTAW…TAYL, NIVI…TAVT, ALLL…ALAI, CILL…LVGM, SGPL…YKAW, and FSIY…YLWA.

Belongs to the UbiA prenyltransferase family. Protoheme IX farnesyltransferase subfamily.

The protein localises to the cell inner membrane. It carries out the reaction heme b + (2E,6E)-farnesyl diphosphate + H2O = Fe(II)-heme o + diphosphate. It participates in porphyrin-containing compound metabolism; heme O biosynthesis; heme O from protoheme: step 1/1. Functionally, converts heme B (protoheme IX) to heme O by substitution of the vinyl group on carbon 2 of heme B porphyrin ring with a hydroxyethyl farnesyl side group. The polypeptide is Protoheme IX farnesyltransferase 1 (Shewanella sp. (strain ANA-3)).